Here is a 668-residue protein sequence, read N- to C-terminus: tRNA 5-methylaminomethyl-2-thiouridine biosynthesis bifunctional protein MnmC (668 aa).

The tRNA (mnm(5)s(2)U34)-methyltransferase stretch occupies residues 1–245 (MKHYSIQPAN…KREMLCGVME (245 aa)). Positions 270–668 (IGGGIASALL…LLKGKAVKAG (399 aa)) are FAD-dependent cmnm(5)s(2)U34 oxidoreductase.

The protein in the N-terminal section; belongs to the methyltransferase superfamily. tRNA (mnm(5)s(2)U34)-methyltransferase family. It in the C-terminal section; belongs to the DAO family. The cofactor is FAD.

It localises to the cytoplasm. It catalyses the reaction 5-aminomethyl-2-thiouridine(34) in tRNA + S-adenosyl-L-methionine = 5-methylaminomethyl-2-thiouridine(34) in tRNA + S-adenosyl-L-homocysteine + H(+). In terms of biological role, catalyzes the last two steps in the biosynthesis of 5-methylaminomethyl-2-thiouridine (mnm(5)s(2)U) at the wobble position (U34) in tRNA. Catalyzes the FAD-dependent demodification of cmnm(5)s(2)U34 to nm(5)s(2)U34, followed by the transfer of a methyl group from S-adenosyl-L-methionine to nm(5)s(2)U34, to form mnm(5)s(2)U34. This Escherichia coli O6:H1 (strain CFT073 / ATCC 700928 / UPEC) protein is tRNA 5-methylaminomethyl-2-thiouridine biosynthesis bifunctional protein MnmC.